An 804-amino-acid polypeptide reads, in one-letter code: General transcription and DNA repair factor IIH helicase/translocase subunit XPB (804 aa).

Disordered stretches follow at residues 1–61 and 220–255; these read MSLK…NSNE and QSSK…KSSS. The span at 14–36 shows a compositional bias: acidic residues; that stretch reads PDEDLEEYSDYSDVDNYGEEDDD. Low complexity-rich tracts occupy residues 47 to 60 and 220 to 229; these read NNNK…TNSN and QSSKQKSSKP. Over residues 236-255 the composition is skewed to basic and acidic residues; the sequence is EDKKDITNDSSKETAEKSSS. In terms of domain architecture, Helicase ATP-binding spans 335 to 497; it reads MFGNGRARSG…DLNFLIGPKM (163 aa). ATP is bound at residue 348-355; that stretch reads LPCGAGKT. The short motif at 450 to 453 is the DEVH box element; it reads DEVH. The 155-residue stretch at 551-705 folds into the Helicase C-terminal domain; it reads QACQFLIDYH…KVITNLKGME (155 aa). Disordered stretches follow at residues 736-761 and 782-804; these read DDGE…SSGS and KQLK…TKRR. Residues 784 to 793 show a composition bias toward basic and acidic residues; that stretch reads LKKDSKEHHA. Residues 794 to 804 show a composition bias toward basic residues; the sequence is LFRKHLYTKRR.

Belongs to the helicase family. RAD25/XPB subfamily. As to quaternary structure, component of the 7-subunit TFIIH core complex composed of XPB/ptr8, XPD/rad15, ssl1, tfb1, tfb2, tfb4 and tfb5, which is active in NER. The core complex associates with the 3-subunit CTD-kinase module TFIIK composed of mcs2/cyclin H, mcs6/cdk7 and pmh1/tfb3 to form the 10-subunit holoenzyme (holo-TFIIH) active in transcription.

Its subcellular location is the nucleus. It catalyses the reaction Couples ATP hydrolysis with the unwinding of duplex DNA by translocating in the 3'-5' direction.. It carries out the reaction ATP + H2O = ADP + phosphate + H(+). In terms of biological role, probable ATP-dependent 3'-5' DNA helicase/translocase. Binds dsDNA rather than ssDNA, unzipping it in a translocase rather than classical helicase activity. Component of the general transcription and DNA repair factor IIH (TFIIH) core complex. When complexed to CDK-activating kinase (CAK), involved in RNA transcription by RNA polymerase II. Also involved in transcription-coupled nucleotide excision repair (NER) of damaged DNA. In NER, TFIIH acts by opening DNA around the lesion to allow the excision of the damaged oligonucleotide and its replacement by a new DNA fragment. The ATPase activity of XPB/ptr8, but not its helicase activity, is required for DNA opening. In transcription, TFIIH has an essential role in transcription initiation. When the pre-initiation complex (PIC) has been established, TFIIH is required for promoter opening and promoter escape. The ATP-dependent helicase activity of XPB/ptr8 is required for promoter escape but not for promoter opening. Plays a role in mRNA export. This Schizosaccharomyces pombe (strain 972 / ATCC 24843) (Fission yeast) protein is General transcription and DNA repair factor IIH helicase/translocase subunit XPB.